We begin with the raw amino-acid sequence, 326 residues long: Vitamin B12 import system permease protein BtuC (326 aa).

The Cytoplasmic portion of the chain corresponds to 1 to 10 (MLTLARQQQR). The helical transmembrane segment at 11–35 (QNIRWLLCLSVLMLLALLLSLCAGE) threads the bilayer. The Periplasmic portion of the chain corresponds to 36-56 (QWISPGDWFSPRGELFVWQIR). The chain crosses the membrane as a helical span at residues 57–81 (LPRTLAVLLVGAALAISGAVMQALF). At 82–92 (ENPLAEPGLLG) the chain is on the cytoplasmic side. The helical transmembrane segment at 93 to 107 (VSNGAGVGLIAAVLL) threads the bilayer. At 108 to 113 (GQGQLP) the chain is on the periplasmic side. The helical transmembrane segment at 114–138 (NWALGLCAIAGALIITLILLRFARR) threads the bilayer. Residues 139–141 (HLS) lie on the Cytoplasmic side of the membrane. The helical transmembrane segment at 142-166 (TSRLLLAGVALGIICSALMTWAIYF) threads the bilayer. The Periplasmic segment spans residues 167-190 (STSVDLRQLMYWMMGGFGGVDWRQ). A helical membrane pass occupies residues 191-206 (SWLMLALIPMLLWICC). The Cytoplasmic portion of the chain corresponds to 207–228 (QSRPMNMLALGEISARQLGLPL). A helical transmembrane segment spans residues 229 to 249 (WFWRNVLVAATGWMVGVSVAL). At 250–257 (AGAIGFIG) the chain is on the periplasmic side. Residues 258 to 267 (LVIPHILRLC) form a helical membrane-spanning segment. At 268–274 (GLTDHRA) the chain is on the cytoplasmic side. A helical transmembrane segment spans residues 275–296 (LLPGCALAGASALLLADIVARL). The Periplasmic segment spans residues 297–304 (ALAAAELP). The chain crosses the membrane as a helical span at residues 305 to 324 (IGVVTATLGAPVFIWLLLKA). Residues 325–326 (GR) lie on the Cytoplasmic side of the membrane.

It belongs to the binding-protein-dependent transport system permease family. FecCD subfamily. In terms of assembly, the complex is composed of two ATP-binding proteins (BtuD), two transmembrane proteins (BtuC) and a solute-binding protein (BtuF).

Its subcellular location is the cell inner membrane. Part of the ABC transporter complex BtuCDF involved in vitamin B12 import. Involved in the translocation of the substrate across the membrane. In Escherichia coli O157:H7, this protein is Vitamin B12 import system permease protein BtuC (btuC).